The chain runs to 352 residues: tRNA N6-adenosine threonylcarbamoyltransferase (352 aa).

Fe cation is bound by residues H117 and H121. Residues 140-144, D173, G186, and N287 each bind substrate; that span reads LVSGG. D315 lines the Fe cation pocket.

Belongs to the KAE1 / TsaD family. The cofactor is Fe(2+).

It is found in the cytoplasm. The enzyme catalyses L-threonylcarbamoyladenylate + adenosine(37) in tRNA = N(6)-L-threonylcarbamoyladenosine(37) in tRNA + AMP + H(+). In terms of biological role, required for the formation of a threonylcarbamoyl group on adenosine at position 37 (t(6)A37) in tRNAs that read codons beginning with adenine. Is involved in the transfer of the threonylcarbamoyl moiety of threonylcarbamoyl-AMP (TC-AMP) to the N6 group of A37, together with TsaE and TsaB. TsaD likely plays a direct catalytic role in this reaction. This Psychrobacter cryohalolentis (strain ATCC BAA-1226 / DSM 17306 / VKM B-2378 / K5) protein is tRNA N6-adenosine threonylcarbamoyltransferase.